The chain runs to 293 residues: LysM and putative peptidoglycan-binding domain-containing protein 4 (293 aa).

Residues M1–Q214 lie on the Extracellular side of the membrane. The disordered stretch occupies residues F28–A65. The N-linked (GlcNAc...) asparagine glycan is linked to N30. The LysM domain occupies L71–I115. Residues W215 to V235 form a helical membrane-spanning segment. The Cytoplasmic portion of the chain corresponds to Y236–A293.

The protein localises to the membrane. This chain is LysM and putative peptidoglycan-binding domain-containing protein 4 (Lysmd4), found in Mus musculus (Mouse).